The primary structure comprises 468 residues: 6-phospho-beta-galactosidase (468 aa).

Positions 19, 116, 159, 160, and 297 each coordinate D-galactose 6-phosphate. Glu160 acts as the Proton donor in catalysis. The active-site Nucleophile is the Glu375. Positions 428, 429, 435, and 437 each coordinate D-galactose 6-phosphate.

It belongs to the glycosyl hydrolase 1 family.

The enzyme catalyses a 6-phospho-beta-D-galactoside + H2O = D-galactose 6-phosphate + an alcohol. The protein operates within carbohydrate metabolism; lactose degradation; D-galactose 6-phosphate and beta-D-glucose from lactose 6-phosphate: step 1/1. The sequence is that of 6-phospho-beta-galactosidase from Streptococcus gordonii (strain Challis / ATCC 35105 / BCRC 15272 / CH1 / DL1 / V288).